Here is a 529-residue protein sequence, read N- to C-terminus: Fibroblast growth factor receptor-like 1 (529 aa).

The signal sequence occupies residues 1–20 (MTRSPALLLLLLGALPSAEA). The Extracellular segment spans residues 21 to 374 (ARGPPRMADK…SSSSTSLPWP (354 aa)). 3 Ig-like C2-type domains span residues 25 to 111 (PRMA…YTLI), 143 to 233 (PRFT…YKVD), and 242 to 350 (PVLT…AFLT). An intrachain disulfide couples Cys47 to Cys95. Asn107 carries an N-linked (GlcNAc...) asparagine glycan. The segment at 116–151 (ISPGKESPGPGGSSGGQEDPASQQWARPRFTQPSKM) is disordered. A disulfide bridge connects residues Cys168 and Cys217. 3 N-linked (GlcNAc...) asparagine glycosylation sites follow: Asn227, Asn251, and Asn289. Cys264 and Cys334 are oxidised to a cystine. The helical transmembrane segment at 375–395 (VVIGIPAGAVFILGTVLLWLC) threads the bilayer. The Cytoplasmic portion of the chain corresponds to 396–529 (QTKKKPCAPA…RIENNGGRVS (134 aa)). Residues 405–427 (ASTLPVPGHRPPGTSRERSGDKD) are disordered.

In terms of assembly, interacts with FGF2 with a low affinity. In terms of tissue distribution, highly expressed in the kidney, brain and lung. Weakly expressed in the muscle, thymus, lymph node, stomach, intestine, colon and liver. Expressed in fetal cartilaginous structures like the nasal cartilage, the ribs and the sternum as well as in the cartilaginous rudiments of developing bones such as the vertebrae and the pelvic bone. High expression is found in the muscles of the tongue and the diaphragm.

The protein resides in the cell membrane. Its function is as follows. Has a negative effect on cell proliferation. The protein is Fibroblast growth factor receptor-like 1 (Fgfrl1) of Mus musculus (Mouse).